Consider the following 201-residue polypeptide: ATP-dependent dethiobiotin synthetase BioD (201 aa).

ATP is bound at residue 11–16 (DVGKTH). Residue Thr-15 participates in Mg(2+) binding. The active site involves Lys-31. ATP is bound by residues Asp-40 and 93 to 96 (ELAG). Mg(2+) is bound by residues Asp-40 and Glu-93.

It belongs to the dethiobiotin synthetase family. In terms of assembly, homodimer. Mg(2+) serves as cofactor.

It localises to the cytoplasm. The catalysed reaction is (7R,8S)-7,8-diammoniononanoate + CO2 + ATP = (4R,5S)-dethiobiotin + ADP + phosphate + 3 H(+). Its pathway is cofactor biosynthesis; biotin biosynthesis; biotin from 7,8-diaminononanoate: step 1/2. Functionally, catalyzes a mechanistically unusual reaction, the ATP-dependent insertion of CO2 between the N7 and N8 nitrogen atoms of 7,8-diaminopelargonic acid (DAPA, also called 7,8-diammoniononanoate) to form a ureido ring. The polypeptide is ATP-dependent dethiobiotin synthetase BioD (Campylobacter jejuni subsp. jejuni serotype O:6 (strain 81116 / NCTC 11828)).